Here is a 95-residue protein sequence, read N- to C-terminus: MVTKEDVLNALKTVADPHMGISIVDMGLIRDVEVDDEGNVKFKLIPTNPYCMSVMAMAFQAKEAVKSLEGVKKVEVTVEGHVMEKDINEMLKEKE.

This is an uncharacterized protein from Methanocaldococcus jannaschii (strain ATCC 43067 / DSM 2661 / JAL-1 / JCM 10045 / NBRC 100440) (Methanococcus jannaschii).